The following is a 267-amino-acid chain: Chlorophyll a-b binding protein 3A, chloroplastic (267 aa).

The transit peptide at 1-34 directs the protein to the chloroplast; sequence MAASTMALSSSTFAGKTVKLAPSSSEITGNGRIT. Residues 153–173 traverse the membrane as a helical segment; the sequence is LVHAQSILAIWACQVVLMGAV. V154, S158, Q166, E174, R177, and L183 together coordinate chlorophyll b. The chlorophyll a site is built by K214, E215, N218, R220, Q232, H247, and A256. Residues 221 to 241 traverse the membrane as a helical segment; that stretch reads LAMFSMFGFFVQAIVTGKGPL. F263 lines the chlorophyll b pocket.

This sequence belongs to the light-harvesting chlorophyll a/b-binding (LHC) protein family. In terms of assembly, the LHC complex consists of chlorophyll a-b binding proteins. Binds at least 14 chlorophylls (8 Chl-a and 6 Chl-b) and carotenoids such as lutein and neoxanthin. serves as cofactor. Photoregulated by reversible phosphorylation of its threonine residues.

Its subcellular location is the plastid. It is found in the chloroplast thylakoid membrane. Its function is as follows. The light-harvesting complex (LHC) functions as a light receptor, it captures and delivers excitation energy to photosystems with which it is closely associated. The sequence is that of Chlorophyll a-b binding protein 3A, chloroplastic (CAB3A) from Solanum lycopersicum (Tomato).